Consider the following 124-residue polypeptide: Large ribosomal subunit protein uL22 (124 aa).

It belongs to the universal ribosomal protein uL22 family. In terms of assembly, part of the 50S ribosomal subunit.

In terms of biological role, this protein binds specifically to 23S rRNA; its binding is stimulated by other ribosomal proteins, e.g. L4, L17, and L20. It is important during the early stages of 50S assembly. It makes multiple contacts with different domains of the 23S rRNA in the assembled 50S subunit and ribosome. Its function is as follows. The globular domain of the protein is located near the polypeptide exit tunnel on the outside of the subunit, while an extended beta-hairpin is found that lines the wall of the exit tunnel in the center of the 70S ribosome. The sequence is that of Large ribosomal subunit protein uL22 from Buchnera aphidicola subsp. Cinara cedri (strain Cc).